A 157-amino-acid chain; its full sequence is 3-hydroxyacyl-[acyl-carrier-protein] dehydratase FabZ (157 aa).

His58 is a catalytic residue.

The protein belongs to the thioester dehydratase family. FabZ subfamily.

It is found in the cytoplasm. The enzyme catalyses a (3R)-hydroxyacyl-[ACP] = a (2E)-enoyl-[ACP] + H2O. In terms of biological role, involved in unsaturated fatty acids biosynthesis. Catalyzes the dehydration of short chain beta-hydroxyacyl-ACPs and long chain saturated and unsaturated beta-hydroxyacyl-ACPs. The sequence is that of 3-hydroxyacyl-[acyl-carrier-protein] dehydratase FabZ from Rhizobium rhizogenes (strain K84 / ATCC BAA-868) (Agrobacterium radiobacter).